The sequence spans 369 residues: Methylthioribose-1-phosphate isomerase (369 aa).

The residue at position 1 (Met1) is an N-acetylmethionine. An Omega-N-methylarginine modification is found at Arg158. Residue Asp248 is the Proton donor of the active site. Ser366 carries the post-translational modification Phosphoserine.

Belongs to the eIF-2B alpha/beta/delta subunits family. MtnA subfamily.

It localises to the cytoplasm. Its subcellular location is the nucleus. It catalyses the reaction 5-(methylsulfanyl)-alpha-D-ribose 1-phosphate = 5-(methylsulfanyl)-D-ribulose 1-phosphate. It participates in amino-acid biosynthesis; L-methionine biosynthesis via salvage pathway; L-methionine from S-methyl-5-thio-alpha-D-ribose 1-phosphate: step 1/6. Catalyzes the interconversion of methylthioribose-1-phosphate (MTR-1-P) into methylthioribulose-1-phosphate (MTRu-1-P). This Mus musculus (Mouse) protein is Methylthioribose-1-phosphate isomerase (Mri1).